Here is a 367-residue protein sequence, read N- to C-terminus: MSGSQTLVVKLGTSVLTGGSRRLNRAHIVELVRQCAQQHAKGHRIVIVTSGAIAAGREHLGYPELPATIASKQLLAAVGQSRLIQLWEQLFSIYGIHIGQMLLTRADLEDRERFLNARDTMNALLDNRIVPVINENDAVATAEIKVGDNDNLSALAAILAGADKLLLLTDQAGLYTADPRNNPQAELIREVHGIDDALRGIAGDSVSGLGTGGMATKLQAADVACRAGIDVVIAAGSQVGVIADVIEGTPVGTRFHALETPLENRKRWIFGAPPAGEITVDDGAVTAIMERGSSLLPKGIRSVVGNFSRGEVIRIRNLSGRDLAHGVSRYNSDALRMLAGHHSQQISEILGYEYGPVAVHRDDMIVS.

K10 provides a ligand contact to ATP. Positions 50, 137, and 149 each coordinate substrate. ATP contacts are provided by residues 169-170 and 211-217; these read TD and TGGMATK. The region spanning 275-353 is the PUA domain; it reads AGEITVDDGA…QQISEILGYE (79 aa).

Belongs to the glutamate 5-kinase family.

It localises to the cytoplasm. It catalyses the reaction L-glutamate + ATP = L-glutamyl 5-phosphate + ADP. It functions in the pathway amino-acid biosynthesis; L-proline biosynthesis; L-glutamate 5-semialdehyde from L-glutamate: step 1/2. Catalyzes the transfer of a phosphate group to glutamate to form L-glutamate 5-phosphate. This chain is Glutamate 5-kinase, found in Yersinia enterocolitica serotype O:8 / biotype 1B (strain NCTC 13174 / 8081).